The chain runs to 191 residues: MASSTTNNPALDLDSDTPENPGHELAQFASGCFWGSELRFQRVVGVIKTEVGYSQGHVHDPNYRLVCSGTTNHSEVVRVQFDPQVCPYSDLLSVFWSRHDPTTLNRQGGDVGTQYRSGIYYYNEEQDCLAKKSKEAKQKEFKDKRVVTEILPAKRFYRAEEYHQQYLEKGGGNGNKQSAQKGCNDPIKCYG.

Disordered regions lie at residues 1-20 (MASS…TPEN) and 168-191 (EKGG…KCYG).

Belongs to the MsrA Met sulfoxide reductase family.

The enzyme catalyses L-methionyl-[protein] + [thioredoxin]-disulfide + H2O = L-methionyl-(S)-S-oxide-[protein] + [thioredoxin]-dithiol. It carries out the reaction [thioredoxin]-disulfide + L-methionine + H2O = L-methionine (S)-S-oxide + [thioredoxin]-dithiol. Functionally, has an important function as a repair enzyme for proteins that have been inactivated by oxidation. Catalyzes the reversible oxidation-reduction of methionine sulfoxide in proteins to methionine. The protein is Peptide methionine sulfoxide reductase of Fragaria ananassa (Strawberry).